Reading from the N-terminus, the 88-residue chain is HssA/B-like protein 12 (88 aa).

Belongs to the hssA/B family.

The protein is HssA/B-like protein 12 (hssl12) of Dictyostelium discoideum (Social amoeba).